A 160-amino-acid polypeptide reads, in one-letter code: SsrA-binding protein (160 aa).

This sequence belongs to the SmpB family.

It localises to the cytoplasm. Functionally, required for rescue of stalled ribosomes mediated by trans-translation. Binds to transfer-messenger RNA (tmRNA), required for stable association of tmRNA with ribosomes. tmRNA and SmpB together mimic tRNA shape, replacing the anticodon stem-loop with SmpB. tmRNA is encoded by the ssrA gene; the 2 termini fold to resemble tRNA(Ala) and it encodes a 'tag peptide', a short internal open reading frame. During trans-translation Ala-aminoacylated tmRNA acts like a tRNA, entering the A-site of stalled ribosomes, displacing the stalled mRNA. The ribosome then switches to translate the ORF on the tmRNA; the nascent peptide is terminated with the 'tag peptide' encoded by the tmRNA and targeted for degradation. The ribosome is freed to recommence translation, which seems to be the essential function of trans-translation. The sequence is that of SsrA-binding protein from Novosphingobium aromaticivorans (strain ATCC 700278 / DSM 12444 / CCUG 56034 / CIP 105152 / NBRC 16084 / F199).